Consider the following 145-residue polypeptide: Endoribonuclease YbeY (145 aa).

Zn(2+)-binding residues include H109, H113, and H119.

The protein belongs to the endoribonuclease YbeY family. Requires Zn(2+) as cofactor.

Its subcellular location is the cytoplasm. Its function is as follows. Single strand-specific metallo-endoribonuclease involved in late-stage 70S ribosome quality control and in maturation of the 3' terminus of the 16S rRNA. The chain is Endoribonuclease YbeY from Ruthia magnifica subsp. Calyptogena magnifica.